The primary structure comprises 189 residues: Elongation factor P (189 aa).

K34 bears the N6-(3,6-diaminohexanoyl)-5-hydroxylysine mark.

It belongs to the elongation factor P family. Post-translationally, may be beta-lysylated on the epsilon-amino group of Lys-34 by the combined action of EpmA and EpmB, and then hydroxylated on the C5 position of the same residue by EpmC (if this protein is present). Lysylation is critical for the stimulatory effect of EF-P on peptide-bond formation. The lysylation moiety may extend toward the peptidyltransferase center and stabilize the terminal 3-CCA end of the tRNA. Hydroxylation of the C5 position on Lys-34 may allow additional potential stabilizing hydrogen-bond interactions with the P-tRNA.

The protein localises to the cytoplasm. Its pathway is protein biosynthesis; polypeptide chain elongation. Involved in peptide bond synthesis. Alleviates ribosome stalling that occurs when 3 or more consecutive Pro residues or the sequence PPG is present in a protein, possibly by augmenting the peptidyl transferase activity of the ribosome. Modification of Lys-34 is required for alleviation. The chain is Elongation factor P from Francisella tularensis subsp. tularensis (strain FSC 198).